A 3010-amino-acid chain; its full sequence is Genome polyprotein (3010 aa).

Position 2 is an N-acetylserine; by host (Ser2). Residues 2–23 (STNPKPQRKTKRNTYRRPQDVK) are interaction with STAT1. The interval 2–58 (STNPKPQRKTKRNTYRRPQDVKFPGGGQIVGGVYVLPRRGPTLGVRATRKTSERSQP) is interaction with EIF2AK2/PKR. Residues 2-59 (STNPKPQRKTKRNTYRRPQDVKFPGGGQIVGGVYVLPRRGPTLGVRATRKTSERSQPR) are interaction with DDX3X. The interval 2–75 (STNPKPQRKT…PKARRPEGRA (74 aa)) is disordered. Residues 2-168 (STNPKPQRKT…EDGVNYATGN (167 aa)) lie on the Cytoplasmic side of the membrane. 2 short sequence motifs (nuclear localization signal) span residues 5–13 (PKPQRKTKR) and 38–43 (PRRGPT). A compositionally biased stretch (basic residues) spans 7-16 (PQRKTKRNTY). Residue Ser53 is modified to Phosphoserine; by host. 2 consecutive short sequence motifs (nuclear localization signal) follow at residues 58 to 64 (PRGRRQP) and 66 to 71 (PKARRP). A compositionally biased stretch (basic residues) spans 58–68 (PRGRRQPIPKA). At Ser99 the chain carries Phosphoserine; by host. The important for endoplasmic reticulum and mitochondrial localization stretch occupies residues 112–152 (PRRRSRNLGKVIDTLTCGFADLMGYIPLVGAPLGGAARALA). Ser116 bears the Phosphoserine; by host PKA mark. Residues 122–173 (VIDTLTCGFADLMGYIPLVGAPLGGAARALAHGVRVLEDGVNYATGNLPGCS) form an interaction with APOA2 region. The tract at residues 164-167 (YATG) is important for lipid droplets localization. The helical transmembrane segment at 169–189 (LPGCSFSIFLLALLSCLTIPA) threads the bilayer. The propeptide at 178–191 (LLALLSCLTIPASA) is ER anchor for the core protein, removed in mature form by host signal peptidase. Over 190 to 358 (SAYQVRNASG…AGAHWGVLAG (169 aa)) the chain is Lumenal. N-linked (GlcNAc...) asparagine; by host glycosylation is found at Asn196, Asn209, Asn234, and Asn250. The interval 265-296 (LVGAAAFCSAMYVGDLCGSVFLVSQLFTFSPR) is important for fusion. N-linked (GlcNAc...) asparagine; by host glycosylation is present at Asn305. Residues 359 to 379 (LAYYSMVGNWAKVLIVMLLFA) form a helical membrane-spanning segment. Residues 380 to 725 (GVDGVTYTTG…WEYIVLLFLL (346 aa)) lie on the Lumenal side of the membrane. Residues 385 to 411 (TYTTGGSQARHTQSVTSFFTQGPAQRI) form an HVR1 region. Residues Asn417, Asn423, Asn430, and Asn448 are each glycosylated (N-linked (GlcNAc...) (high mannose) asparagine; by host). Intrachain disulfides connect Cys429–Cys552, Cys452–Cys459, Cys486–Cys494, and Cys503–Cys508. The tract at residues 474-479 (YTEPRD) is HVR2. Residues 480-493 (LDQRPYCWHYAPRQ) are CD81-binding 1. Residue Asn532 is glycosylated (N-linked (GlcNAc...) (high mannose) asparagine; by host). Asn540 carries N-linked (GlcNAc...) asparagine; by host glycosylation. The segment at 544–551 (PPQGNWFG) is CD81-binding 2. Residue Asn556 is glycosylated (N-linked (GlcNAc...) (high mannose) asparagine; by host). Cys564 and Cys569 are oxidised to a cystine. The N-linked (GlcNAc...) (high mannose) asparagine; by host glycan is linked to Asn576. Intrachain disulfides connect Cys581-Cys585, Cys597-Cys620, and Cys607-Cys644. Residues Asn623 and Asn645 are each glycosylated (N-linked (GlcNAc...) (high mannose) asparagine; by host). Cysteines 652 and 677 form a disulfide. The PKR/eIF2-alpha phosphorylation homology domain (PePHD) stretch occupies residues 660 to 671 (SELSPLLLSTTE). A helical transmembrane segment spans residues 726 to 746 (LADARVCACLWMMLLIAQAEA). Over 747–757 (ALENLVVLNAA) the chain is Lumenal. The helical transmembrane segment at 758-778 (SLAGADGILSFLVFFCAAWYI) threads the bilayer. At 779-781 (KGR) the chain is on the cytoplasmic side. The chain crosses the membrane as a helical span at residues 782–803 (LVPGAAYALYGVWPLLLLLLAL). Residues 804–813 (PPRAYAMDRE) lie on the Lumenal side of the membrane. A helical transmembrane segment spans residues 814 to 834 (MAASCGGVVFVGLILLTLSPH). At 835–838 (YKVF) the chain is on the cytoplasmic side. The helical transmembrane segment at 839 to 859 (LARLIWWLQYFITRAEAHLCV) threads the bilayer. Residues 860–881 (WVPPLNVRGGRDAIILLTCAAH) are Lumenal-facing. A helical membrane pass occupies residues 882–902 (PELIFDITKLLLAILGPLMVL). Residues 903–1026 (QAAITAMPYF…SIEGQGWRLL (124 aa)) enclose the Peptidase C18 domain. Topologically, residues 903-1657 (QAAITAMPYF…CMSADLEVVT (755 aa)) are cytoplasmic. The segment at 904–1206 (AAITAMPYFV…PVESMETTMR (303 aa)) is protease NS2-3. Cys922 is lipidated: S-palmitoyl cysteine; by host. Positions 929–949 (AGGHYVQMAFMKLAALTGTYV) are interaction with host SCPS1. Active-site for protease NS2 activity; shared with dimeric partner residues include His952, Glu972, and Cys993. The region spanning 1027 to 1208 (APITAYAQQT…ESMETTMRSP (182 aa)) is the Peptidase S29 domain. Residues His1083 and Asp1107 each act as charge relay system; for serine protease NS3 activity in the active site. The Zn(2+) site is built by Cys1123 and Cys1125. Residue Ser1165 is the Charge relay system; for serine protease NS3 activity of the active site. Cys1171 and His1175 together coordinate Zn(2+). The region spanning 1217–1369 (PAVPQTFQVA…PNIEEVALSN (153 aa)) is the Helicase ATP-binding domain. 1230–1237 (APTGSGKS) provides a ligand contact to ATP. Mg(2+) is bound by residues Ser1237 and Glu1317. The short motif at 1316–1319 (DECH) is the DECH box element. An RNA-binding region spans residues 1486–1497 (QRRGRTGRGRGG). The helical transmembrane segment at 1658–1678 (STWVLVGGVLAALAAYCLTTG) threads the bilayer. An NS3-binding region spans residues 1679 to 1690 (SVVIVGRIILSG). At 1679 to 1805 (SVVIVGRIIL…SITSPLTTQN (127 aa)) the chain is on the cytoplasmic side. The helical transmembrane segment at 1806–1824 (TLLFNILGGWVAAQLAPPS) threads the bilayer. The Lumenal segment spans residues 1825–1828 (AASA). A helical membrane pass occupies residues 1829 to 1849 (FVGAGIAGAAIGSIGLGKVLV). Residue Asp1850 is a topological domain, cytoplasmic. The helical transmembrane segment at 1851 to 1871 (ILAGYGAGVAGALVAFKVMSG) threads the bilayer. At 1872–1881 (EAPSAEDLVN) the chain is on the lumenal side. The helical transmembrane segment at 1882-1902 (LLPAILSPGALVVGVVCAAIL) threads the bilayer. At 1903–1972 (RRHVGPGEGA…WINEDCSTPC (70 aa)) the chain is on the cytoplasmic side. 2 S-palmitoyl cysteine; by host lipidation sites follow: Cys1968 and Cys1972. An intramembrane segment occupies 1973 to 2002 (SGSWLKDVWDWICTVLTDFKTWLQSKLLPK). Topologically, residues 2003–2989 (LPGVPFFSCQ…YHSLSRARPR (987 aa)) are cytoplasmic. Positions 2011, 2029, 2031, and 2052 each coordinate Zn(2+). The interval 2120 to 2208 (EFFTELDGVR…ASSSASQLSA (89 aa)) is FKBP8-binding. The tract at residues 2120 to 2332 (EFFTELDGVR…PIPPPRKKRT (213 aa)) is transcriptional activation. The segment at 2135-2139 (PACRP) is interaction with non-structural protein 4A. Positions 2187-2220 (KRRLARGSPPSLASSSASQLSAPSLKATCTTHHD) are disordered. An interaction with host SKP2 region spans residues 2189 to 2441 (RLARGSPPSL…PCAAEESKLP (253 aa)). Phosphoserine; by host; in p56 is present on Ser2194. Residues 2194–2211 (SPPSLASSSASQLSAPSL) are compositionally biased toward low complexity. 5 positions are modified to phosphoserine; by host; in p58: Ser2197, Ser2201, Ser2204, Ser2207, and Ser2210. The interval 2210-2249 (SLKATCTTHHDSPDADLIEANLLWRQEMGGNITRVESENK) is ISDR. The interval 2210-2275 (SLKATCTTHH…REVSVAAEIL (66 aa)) is interaction with EIF2AK2/PKR. The segment at 2249–2306 (KVVILDSFDPLRAEEDEREVSVAAEILRKSKKFPPALPIWARPDYNPPLLESWKSPDY) is NS4B-binding. The short motif at 2322-2325 (PPIP) is the SH3-binding element. The Nuclear localization signal signature appears at 2326–2334 (PPRKKRTVV). A Glycyl lysine isopeptide (Lys-Gly) (interchain with G-Cter in ubiquitin) cross-link involves residue Lys2350. Positions 2351–2371 (TFGSSGSSAVDSGTATAPPDQ) are enriched in polar residues. The segment at 2351–2408 (TFGSSGSSAVDSGTATAPPDQTSDDGDKESDVESYSSMPPLEGEPGDPDLSDGSWSTV) is disordered. The segment at 2354 to 2377 (SSGSSAVDSGTATAPPDQTSDDGD) is V3. Over residues 2372 to 2382 (TSDDGDKESDV) the composition is skewed to acidic residues. Residues Ser2448 and Ser2461 each carry the phosphoserine; by host modification. One can recognise a RdRp catalytic domain in the interval 2633 to 2751 (PMGFSYDTRC…ICESAGTQED (119 aa)). Residues Asp2639, Asp2737, and Asp2738 each coordinate Mg(2+). The helical transmembrane segment at 2990–3010 (WFMWCLLLLSVGVGIYLLPNR) threads the bilayer.

Belongs to the hepacivirus polyprotein family. Homooligomer. Interacts with E1 (via C-terminus). Interacts with the non-structural protein 5A. Interacts (via N-terminus) with host STAT1 (via SH2 domain); this interaction results in decreased STAT1 phosphorylation and ubiquitin-mediated proteasome-dependent STAT1 degradation, leading to decreased IFN-stimulated gene transcription. Interacts with host STAT3; this interaction constitutively activates STAT3. Interacts with host LTBR receptor. Interacts with host TNFRSF1A receptor and possibly induces apoptosis. Interacts with host HNRPK. Interacts with host YWHAE. Interacts with host UBE3A/E6AP. Interacts with host DDX3X. Interacts with host APOA2. Interacts with host RXRA protein. Interacts with host SP110 isoform 3/Sp110b; this interaction sequesters the transcriptional corepressor SP110 away from the nucleus. Interacts with host CREB3 nuclear transcription protein; this interaction triggers cell transformation. Interacts with host ACY3. Interacts with host C1QR1. Interacts with host RBM24; this interaction, which enhances the interaction of the mature core protein with 5'-UTR, may inhibit viral translation and favor replication. Interacts with host EIF2AK2/PKR; this interaction induces the autophosphorylation of EIF2AK2. Part of the viral assembly initiation complex composed of NS2, E1, E2, NS3, NS4A, NS5A and the mature core protein. In terms of assembly, forms a heterodimer with envelope glycoprotein E2. Interacts with mature core protein. Interacts with protease NS2. The heterodimer E1/E2 interacts with host CLDN1; this interaction plays a role in viral entry into host cell. Interacts with host SPSB2 (via C-terminus). Part of the viral assembly initiation complex composed of NS2, E1, E2, NS3, NS4A, NS5A and the mature core protein. Interacts with host NEURL3; this interaction prevents E1 binding to glycoprotein E2. As to quaternary structure, forms a heterodimer with envelope glycoprotein E1. Interacts with host CD81 and SCARB1 receptors; these interactions play a role in viral entry into host cell. Interacts with host EIF2AK2/PKR; this interaction inhibits EIF2AK2 and probably allows the virus to evade the innate immune response. Interacts with host CD209/DC-SIGN and CLEC4M/DC-SIGNR. Interact with host SPCS1; this interaction is essential for viral particle assembly. Interacts with protease NS2. The heterodimer E1/E2 interacts with host CLDN1; this interaction plays a role in viral entry into host cell. Part of the viral assembly initiation complex composed of NS2, E1, E2, NS3, NS4A, NS5A and the mature core protein. Interacts with host SLC3A2/4F2hc; the interaction may facilitate viral entry into host cell. Interacts with human PLSCR1. Homohexamer. Homoheptamer. Interacts with protease NS2. In terms of assembly, homodimer. Interacts with host SPCS1; this interaction is essential for viral particle assembly. Interacts with envelope glycoprotein E1. Interacts with envelope glycoprotein E2. Interacts with viroporin p7. Interacts with serine protease/helicase NS3. Part of the replication complex composed of NS2, NS3, NS4A, NS4B, NS5A and the RNA-directed RNA polymerase embedded in an ER-derived membranous web. Part of the viral assembly initiation complex composed of NS2, E1, E2, NS3, NS4A, NS5A and the mature core protein. As to quaternary structure, interacts with protease NS2. Interacts with non-structural protein 4A; this interaction stabilizes the folding of NS3 serine protease. NS3-NS4A interaction is essential for NS3 activation and allows membrane anchorage of the latter. NS3/NS4A complex also prevents phosphorylation of host IRF3, thus preventing the establishment of dsRNA induced antiviral state. Interacts with host MAVS; this interaction leads to the cleavage and inhibition of host MAVS. Interacts with host TICAM1; this interaction leads to the cleavage and inhibition of host TICAM1. Interacts with host TANK-binding kinase/TBK1; this interaction results in the inhibition of the association between TBK1 and IRF3, which leads to the inhibition of IRF3 activation. Interacts with host RBM24. Part of the replication complex composed of NS2, NS3, NS4A, NS4B, NS5A and the RNA-directed RNA polymerase embedded in an ER-derived membranous web. Part of the viral assembly initiation complex composed of NS2, E1, E2, NS3, NS4A, NS5A and the mature core protein. Interacts with NS3 serine protease; this interaction stabilizes the folding of NS3 serine protease. NS3-NS4A interaction is essential for NS3 activation and allows membrane anchorage of the latter. Interacts with non-structural protein 5A (via N-terminus). Part of the replication complex composed of NS2, NS3, NS4A, NS4B, NS5A and the RNA-directed RNA polymerase embedded in an ER-derived membranous web. Part of the viral assembly initiation complex composed of NS2, E1, E2, NS3, NS4A, NS5A and the mature core protein. In terms of assembly, homomultimer. Interacts with non-structural protein NS5A. Interacts with host PLA2G4C; this interaction likely initiates the recruitment of replication complexes to lipid droplets. Interacts with host STING; this interaction disrupts the interaction between STING and TBK1 thereby suppressing the interferon signaling. Part of the replication complex composed of NS2, NS3, NS4A, NS4B, NS5A and the RNA-directed RNA polymerase embedded in an ER-derived membranous web. As to quaternary structure, monomer. Homodimer; dimerization is required for RNA-binding. Interacts with the mature core protein. Interacts (via N-terminus) with non-structural protein 4A. Interacts with non-structural protein 4B. Interacts (via region D2) with RNA-directed RNA polymerase. Part of the viral assembly initiation complex composed of NS2, E1, E2, NS3, NS4A, NS5A and the mature core protein. Part of the replication complex composed of NS2, NS3, NS4A, NS4B, NS5A and the RNA-directed RNA polymerase embedded in an ER-derived membranous web. Interacts with host GRB2. Interacts with host BIN1. Interacts with host PIK3R1. Interacts with host SRCAP. Interacts with host FKBP8. Interacts (via C-terminus) with host VAPB (via MSP domain). Interacts with host EIF2AK2/PKR; this interaction leads to disruption of EIF2AK2 dimerization by NS5A and probably allows the virus to evade the innate immune response. Interacts (via N-terminus) with host PACSIN2 (via N-terminus); this interaction attenuates protein kinase C alpha-mediated phosphorylation of PACSIN2 by disrupting the interaction between PACSIN2 and PRKCA. Interacts (via N-terminus) with host SRC kinase (via SH2 domain). Interacts with most Src-family kinases. Interacts with host IFI27 and SKP2; promotes the ubiquitin-mediated proteasomal degradation of NS5A. Interacts with host GPS2. Interacts with host TNFRSF21; this interaction allows the modulation by the virus of JNK, p38 MAPK, STAT3, and Akt signaling pathways in a DR6-dependent manner. Interacts (via N-terminus) with host CIDEB (via N-terminus); this interaction seems to regulate the association of HCV particles with APOE. Interacts with host CHKA/Choline Kinase-alpha; CHKA bridges host PI4KA and NS5A and potentiates NS5A-stimulated PI4KA activity, which then facilitates the targeting of the ternary complex to the ER for viral replication. Interacts with host SPSB2 (via C-terminus); this interaction targets NS5A for ubiquitination and degradation. Interacts with host RAB18; this interaction may promote the association of NS5A and other replicase components with lipid droplets. Interacts (via region D2) with host PPIA/CYPA; the interaction stimulates RNA-binding ability of NS5A and is dependent on the peptidyl-prolyl cis-trans isomerase activity of PPIA/CYPA. Interacts with host TRIM14; this interaction induces the degradation of NS5A. Homooligomer. Interacts with non-structural protein 5A. Interacts with host VAPB. Interacts with host PRK2/PKN2. Interacts with host HNRNPA1 and SEPT6; these interactions facilitate viral replication. Part of the replication complex composed of NS2, NS3, NS4A, NS4B, NS5A and the RNA-directed RNA polymerase. The cofactor is Zn(2+). Mg(2+) is required as a cofactor. Post-translationally, specific enzymatic cleavages in vivo yield mature proteins. The structural proteins, core, E1, E2 and p7 are produced by proteolytic processing by host signal peptidases. The core protein precursor is synthesized as a 23 kDa, which is retained in the ER membrane through the hydrophobic signal peptide. Cleavage by the signal peptidase releases the 21 kDa mature core protein. The cleavage of the core protein precursor occurs between aminoacids 176 and 188 but the exact cleavage site is not known. Some degraded forms of the core protein appear as well during the course of infection. The other proteins (p7, NS2, NS3, NS4A, NS4B, NS5A and NS5B) are cleaved by the viral proteases. Autoprocessing between NS2 and NS3 is mediated by the NS2 cysteine protease catalytic domain and regulated by the NS3 N-terminal domain. Phosphorylated by host PKC and PKA. In terms of processing, ubiquitinated; mediated by UBE3A and leading to core protein subsequent proteasomal degradation. Post-translationally, highly N-glycosylated. Palmitoylation is required for NS2/3 autoprocessing and E2 recruitment to membranes. In terms of processing, palmitoylated. This modification may play a role in its polymerization or in protein-protein interactions. Post-translationally, phosphorylated on serines in a basal form termed p56. p58 is a hyperphosphorylated form of p56. p56 and p58 coexist in the cell in roughly equivalent amounts. Hyperphosphorylation is dependent on the presence of NS4A. Host CSNK1A1/CKI-alpha or RPS6KB1 kinases may be responsible for NS5A phosphorylation. Tyrosine phosphorylation is essential for the interaction with host SRC. In terms of processing, ubiquitinated. Ubiquitination, most probably at Lys-2350, mediated by host IFI27 and SKP2 leads to proteasomal degradation, restricting viral infection. Ubiquitination by host TRIM22 leads to interruption of viral replication. Post-translationally, the N-terminus is phosphorylated by host PRK2/PKN2.

The protein localises to the host endoplasmic reticulum membrane. It is found in the host mitochondrion membrane. It localises to the virion. The protein resides in the host cytoplasm. Its subcellular location is the host nucleus. The protein localises to the host lipid droplet. It is found in the virion membrane. It localises to the host mitochondrion. The protein resides in the host cell membrane. Its subcellular location is the host perinuclear region. The catalysed reaction is Hydrolysis of four peptide bonds in the viral precursor polyprotein, commonly with Asp or Glu in the P6 position, Cys or Thr in P1 and Ser or Ala in P1'.. It carries out the reaction a ribonucleoside 5'-triphosphate + H2O = a ribonucleoside 5'-diphosphate + phosphate + H(+). It catalyses the reaction ATP + H2O = ADP + phosphate + H(+). The enzyme catalyses RNA(n) + a ribonucleoside 5'-triphosphate = RNA(n+1) + diphosphate. Its activity is regulated as follows. Inhibited by the antiviral drug hexamethylene amiloride. Inhibition by amantadine appears to be genotype-dependent. Also inhibited by long-alkyl-chain iminosugar derivatives. Activity is up-regulated by PRK2/PKN2-mediated phosphorylation. Functionally, packages viral RNA to form a viral nucleocapsid, and promotes virion budding. Participates in the viral particle production as a result of its interaction with the non-structural protein 5A. Binds RNA and may function as a RNA chaperone to induce the RNA structural rearrangements taking place during virus replication. Modulates viral translation initiation by interacting with viral IRES and 40S ribosomal subunit. Affects various cell signaling pathways, host immunity and lipid metabolism. Prevents the establishment of cellular antiviral state by blocking the interferon-alpha/beta (IFN-alpha/beta) and IFN-gamma signaling pathways and by blocking the formation of phosphorylated STAT1 and promoting ubiquitin-mediated proteasome-dependent degradation of STAT1. Activates STAT3 leading to cellular transformation. Regulates the activity of cellular genes, including c-myc and c-fos. May repress the promoter of p53, and sequester CREB3 and SP110 isoform 3/Sp110b in the cytoplasm. Represses cell cycle negative regulating factor CDKN1A, thereby interrupting an important check point of normal cell cycle regulation. Targets transcription factors involved in the regulation of inflammatory responses and in the immune response: suppresses TNF-induced NF-kappa-B activation, and activates AP-1. Binds to dendritic cells (DCs) via C1QR1, resulting in down-regulation of T-lymphocytes proliferation. Alters lipid metabolism by interacting with hepatocellular proteins involved in lipid accumulation and storage. Induces up-regulation of FAS promoter activity, and thereby contributes to the increased triglyceride accumulation in hepatocytes (steatosis). Its function is as follows. Forms a heterodimer with envelope glycoprotein E2, which mediates virus attachment to the host cell, virion internalization through clathrin-dependent endocytosis and fusion with host membrane. Fusion with the host cell is most likely mediated by both E1 and E2, through conformational rearrangements of the heterodimer required for fusion rather than a classical class II fusion mechanism. E1/E2 heterodimer binds host apolipoproteins such as APOB and ApoE thereby forming a lipo-viro-particle (LVP). APOE associated to the LVP allows the initial virus attachment to cell surface receptors such as the heparan sulfate proteoglycans (HSPGs), syndecan-1 (SDC1), syndecan-1 (SDC2), the low-density lipoprotein receptor (LDLR) and scavenger receptor class B type I (SCARB1). The cholesterol transfer activity of SCARB1 allows E2 exposure and binding of E2 to SCARB1 and the tetraspanin CD81. E1/E2 heterodimer binding on CD81 activates the epithelial growth factor receptor (EGFR) signaling pathway. Diffusion of the complex E1-E2-EGFR-SCARB1-CD81 to the cell lateral membrane allows further interaction with Claudin 1 (CLDN1) and occludin (OCLN) to finally trigger HCV entry. Forms a heterodimer with envelope glycoprotein E1, which mediates virus attachment to the host cell, virion internalization through clathrin-dependent endocytosis and fusion with host membrane. Fusion with the host cell is most likely mediated by both E1 and E2, through conformational rearrangements of the heterodimer required for fusion rather than a classical class II fusion mechanism. The interaction between envelope glycoprotein E2 and host apolipoprotein E/APOE allows the proper assembly, maturation and infectivity of the viral particles. This interaction is probably promoted via the up-regulation of cellular autophagy by the virus. E1/E2 heterodimer binds host apolipoproteins such as APOB and APOE thereby forming a lipo-viro-particle (LVP). APOE associated to the LVP allows the initial virus attachment to cell surface receptors such as the heparan sulfate proteoglycans (HSPGs), syndecan-1 (SDC1), syndecan-1 (SDC2), the low-density lipoprotein receptor (LDLR) and scavenger receptor class B type I (SCARB1). The cholesterol transfer activity of SCARB1 allows E2 exposure and binding of E2 to SCARB1 and the tetraspanin CD81. E1/E2 heterodimer binding on CD81 activates the epithelial growth factor receptor (EGFR) signaling pathway. Diffusion of the complex E1-E2-EGFR-SCARB1-CD81 to the cell lateral membrane allows further interaction with Claudin 1 (CLDN1) and occludin (OCLN) to finally trigger HCV entry. Inhibits host EIF2AK2/PKR activation, preventing the establishment of an antiviral state. Viral ligand for CD209/DC-SIGN and CLEC4M/DC-SIGNR, which are respectively found on dendritic cells (DCs), and on liver sinusoidal endothelial cells and macrophage-like cells of lymph node sinuses. These interactions allow the capture of circulating HCV particles by these cells and subsequent facilitated transmission to permissive cells such as hepatocytes and lymphocyte subpopulations. The interaction between E2 and host amino acid transporter complex formed by SLC3A2 and SLC7A5/LAT1 may facilitate viral entry into host cell. In terms of biological role, ion channel protein that acts as a viroporin and plays an essential role in the assembly, envelopment and secretion of viral particles. Regulates the host cell secretory pathway, which induces the intracellular retention of viral glycoproteins and favors assembly of viral particles. Creates a pore in acidic organelles and releases Ca(2+) and H(+) in the cytoplasm of infected cells, leading to a productive viral infection. High levels of cytoplasmic Ca(2+) may trigger membrane trafficking and transport of viral ER-associated proteins to viroplasms, sites of viral genome replication. This ionic imbalance induces the assembly of the inflammasome complex, which triggers the maturation of pro-IL-1beta into IL-1beta through the action of caspase-1. Targets also host mitochondria and induces mitochondrial depolarization. In addition of its role as a viroporin, acts as a lipid raft adhesion factor. Functionally, cysteine protease required for the proteolytic auto-cleavage between the non-structural proteins NS2 and NS3. The N-terminus of NS3 is required for the function of NS2 protease (active region NS2-3). Promotes the initiation of viral particle assembly by mediating the interaction between structural and non-structural proteins. Its function is as follows. Displays three enzymatic activities: serine protease with a chymotrypsin-like fold, NTPase and RNA helicase. NS3 serine protease, in association with NS4A, is responsible for the cleavages of NS3-NS4A, NS4A-NS4B, NS4B-NS5A and NS5A-NS5B. The NS3/NS4A complex prevents phosphorylation of host IRF3, thus preventing the establishment of dsRNA induced antiviral state. The NS3/NS4A complex induces host amino acid transporter component SLC3A2, thus contributing to HCV propagation. NS3 RNA helicase binds to RNA and unwinds both dsDNA and dsRNA in the 3' to 5' direction, and likely resolves RNA complicated stable secondary structures in the template strand. Binds a single ATP and catalyzes the unzipping of a single base pair of dsRNA. Inhibits host antiviral proteins TBK1 and IRF3 thereby preventing the establishment of an antiviral state. Cleaves host MAVS/CARDIF thereby preventing the establishment of an antiviral state. Cleaves host TICAM1/TRIF, thereby disrupting TLR3 signaling and preventing the establishment of an antiviral state. Induces a specific membrane alteration that serves as a scaffold for the virus replication complex. This membrane alteration gives rise to the so-called ER-derived membranous web that contains the replication complex. NS4B self-interaction contributes to its function in membranous web formation. Promotes host TRIF protein degradation in a CASP8-dependent manner thereby inhibiting host TLR3-mediated interferon signaling. Disrupts the interaction between STING and TBK1 contributing to the inhibition of interferon signaling. In terms of biological role, phosphorylated protein that is indispensable for viral replication and assembly. Both hypo- and hyperphosphorylated states are required for the viral life cycle. The hyperphosphorylated form of NS5A is an inhibitor of viral replication. Involved in RNA-binding and especially in binding to the viral genome. Zinc is essential for RNA-binding. Participates in the viral particle production as a result of its interaction with the mature viral core protein. Its interaction with host VAPB may target the viral replication complex to vesicles. Down-regulates viral IRES translation initiation. Mediates interferon resistance, presumably by interacting with and inhibiting host EIF2AK2/PKR. Prevents BIN1-induced apoptosis. Acts as a transcriptional activator of some host genes important for viral replication when localized in the nucleus. Via the interaction with host PACSIN2, modulates lipid droplet formation in order to promote virion assembly. Modulates TNFRSF21/DR6 signaling pathway for viral propagation. Functionally, RNA-dependent RNA polymerase that performs primer-template recognition and RNA synthesis during viral replication. Initiates RNA transcription/replication at a flavin adenine dinucleotide (FAD), resulting in a 5'- FAD cap on viral RNAs. In this way, recognition of viral 5' RNA by host pattern recognition receptors can be bypassed, thereby evading activation of antiviral pathways. Its function is as follows. Peptide cofactor which forms a non-covalent complex with the N-terminal of NS3 serine protease. The NS3/NS4A complex prevents phosphorylation of host IRF3, thus preventing the establishment of dsRNA induced antiviral state. The NS3/NS4A complex induces host amino acid transporter component SLC3A2, thus contributing to HCV propagation. This Homo sapiens (Human) protein is Genome polyprotein.